A 316-amino-acid polypeptide reads, in one-letter code: Lipoyl synthase (316 aa).

Over residues 1–19 (MRDLKIPEQRHPEKAHRPD) the composition is skewed to basic and acidic residues. The segment at 1–31 (MRDLKIPEQRHPEKAHRPDNAQPKKPSWIRV) is disordered. [4Fe-4S] cluster-binding residues include C55, C60, C66, C81, C85, C88, and S295. Positions 67–284 (WSQGHATMMI…EKAAYGKGFL (218 aa)) constitute a Radical SAM core domain.

This sequence belongs to the radical SAM superfamily. Lipoyl synthase family. It depends on [4Fe-4S] cluster as a cofactor.

It is found in the cytoplasm. The enzyme catalyses [[Fe-S] cluster scaffold protein carrying a second [4Fe-4S](2+) cluster] + N(6)-octanoyl-L-lysyl-[protein] + 2 oxidized [2Fe-2S]-[ferredoxin] + 2 S-adenosyl-L-methionine + 4 H(+) = [[Fe-S] cluster scaffold protein] + N(6)-[(R)-dihydrolipoyl]-L-lysyl-[protein] + 4 Fe(3+) + 2 hydrogen sulfide + 2 5'-deoxyadenosine + 2 L-methionine + 2 reduced [2Fe-2S]-[ferredoxin]. The protein operates within protein modification; protein lipoylation via endogenous pathway; protein N(6)-(lipoyl)lysine from octanoyl-[acyl-carrier-protein]: step 2/2. Its function is as follows. Catalyzes the radical-mediated insertion of two sulfur atoms into the C-6 and C-8 positions of the octanoyl moiety bound to the lipoyl domains of lipoate-dependent enzymes, thereby converting the octanoylated domains into lipoylated derivatives. This chain is Lipoyl synthase, found in Ruegeria sp. (strain TM1040) (Silicibacter sp.).